A 267-amino-acid chain; its full sequence is MNHQKSTTSGDDETDYFDAIHVDLFTAKILSKLPVKSIAQCRCVSKLWSSQIRRPYYNMLFPIMSPAPPRILFTIENAEGLFFYTSPQPRNPDENTSLVATLHHRTSGNSLLITSPPVGGLLCLEHDRKNYSRVLVISNPITGEFLALPKLRINEIKKELLYLNETYIFGYDPIDKQSKDAERHQWSKHIYQLPNRYLNKVVAAGVVGSSEIVFYRKYTREQDQFFIAYYNLESNIITRVILEVPLLFSGTCCVNAFTNYVGDVRLM.

Residues 15 to 63 (DYFDAIHVDLFTAKILSKLPVKSIAQCRCVSKLWSSQIRRPYYNMLFPI) form the F-box domain.

The polypeptide is Putative F-box protein At1g61060 (Arabidopsis thaliana (Mouse-ear cress)).